Reading from the N-terminus, the 127-residue chain is Large ribosomal subunit protein bL19 (127 aa).

This sequence belongs to the bacterial ribosomal protein bL19 family.

This protein is located at the 30S-50S ribosomal subunit interface and may play a role in the structure and function of the aminoacyl-tRNA binding site. The polypeptide is Large ribosomal subunit protein bL19 (Synechococcus sp. (strain JA-3-3Ab) (Cyanobacteria bacterium Yellowstone A-Prime)).